Reading from the N-terminus, the 433-residue chain is Protoheme IX farnesyltransferase 2 (433 aa).

Positions 1–164 (MQRFTGLVTA…LTKPRLMWLL (164 aa)) are unknown. 13 helical membrane-spanning segments follow: residues 4-24 (FTGL…LGVA), 35-55 (AVAH…AAAL), 67-87 (WGVT…MAVL), 95-115 (LHLF…TWHL), 160-180 (LMWL…VTGA), 184-204 (GVTI…AGTF), 236-256 (AFGV…VNPL), 257-277 (AAAL…VVLK), 282-304 (WNTV…AVAG), 308-330 (LPAL…NLAI), 357-377 (ILYW…VAGF), 378-398 (GPVY…TVVV), and 413-433 (HASN…TMVI). Residues 165-430 (CLLALSGMAL…ALLVAILVET (266 aa)) are protoheme IX prenyltransferase.

This sequence in the C-terminal section; belongs to the UbiA prenyltransferase family. Protoheme IX farnesyltransferase subfamily.

The protein localises to the cell membrane. The catalysed reaction is heme b + (2E,6E)-farnesyl diphosphate + H2O = Fe(II)-heme o + diphosphate. It participates in porphyrin-containing compound metabolism; heme O biosynthesis; heme O from protoheme: step 1/1. Its function is as follows. Converts heme B (protoheme IX) to heme O by substitution of the vinyl group on carbon 2 of heme B porphyrin ring with a hydroxyethyl farnesyl side group. The sequence is that of Protoheme IX farnesyltransferase 2 (ctaB2) from Natronomonas pharaonis (strain ATCC 35678 / DSM 2160 / CIP 103997 / JCM 8858 / NBRC 14720 / NCIMB 2260 / Gabara) (Halobacterium pharaonis).